We begin with the raw amino-acid sequence, 142 residues long: Large ribosomal subunit protein uL13 (142 aa).

The protein belongs to the universal ribosomal protein uL13 family. As to quaternary structure, part of the 50S ribosomal subunit.

Functionally, this protein is one of the early assembly proteins of the 50S ribosomal subunit, although it is not seen to bind rRNA by itself. It is important during the early stages of 50S assembly. The protein is Large ribosomal subunit protein uL13 of Dictyoglomus thermophilum (strain ATCC 35947 / DSM 3960 / H-6-12).